We begin with the raw amino-acid sequence, 429 residues long: Glucose-6-phosphate isomerase (429 aa).

Residue Glu282 is the Proton donor of the active site. Active-site residues include His303 and Lys418.

It belongs to the GPI family.

It is found in the cytoplasm. It carries out the reaction alpha-D-glucose 6-phosphate = beta-D-fructose 6-phosphate. The protein operates within carbohydrate biosynthesis; gluconeogenesis. It participates in carbohydrate degradation; glycolysis; D-glyceraldehyde 3-phosphate and glycerone phosphate from D-glucose: step 2/4. Functionally, catalyzes the reversible isomerization of glucose-6-phosphate to fructose-6-phosphate. This is Glucose-6-phosphate isomerase from Mesomycoplasma hyopneumoniae (strain J / ATCC 25934 / NCTC 10110) (Mycoplasma hyopneumoniae).